The primary structure comprises 226 residues: DNA mismatch repair protein MutH (226 aa).

Belongs to the MutH family.

Its subcellular location is the cytoplasm. In terms of biological role, sequence-specific endonuclease that cleaves unmethylated GATC sequences. It is involved in DNA mismatch repair. The protein is DNA mismatch repair protein MutH of Actinobacillus pleuropneumoniae serotype 5b (strain L20).